A 152-amino-acid polypeptide reads, in one-letter code: ASP external chaperone (152 aa).

Residues 1-22 form the signal peptide; the sequence is MNKPVTLLLATLLAPLSGQLCA.

As to quaternary structure, forms a complex with the serine protease ASP in the periplasm. After translocation of the ASP-ORF2 complex from the periplasm to the extracellular space, the complex is dissociated in a pH-dependent manner.

It is found in the periplasm. The protein resides in the secreted. Degraded by ASP after secretion and dissociation of the ASP-ORF2 complex. Its function is as follows. Required for the production of the active form of the Aeromonas extracellular serine protease (ASP). Acts as a chaperone that helps ASP form an active structure in the periplasm. Formation of a complex with ASP in the periplasm also inactivates the protease activity and likely protects ASP from intrinsic proteases. Dissociation of the ASP-ORF2 complex after secretion in the extracellular space generates an active ASP. In Aeromonas sobria, this protein is ASP external chaperone.